We begin with the raw amino-acid sequence, 124 residues long: Small ribosomal subunit protein uS12 (124 aa).

Position 89 is a 3-methylthioaspartic acid (D89).

Belongs to the universal ribosomal protein uS12 family. As to quaternary structure, part of the 30S ribosomal subunit. Contacts proteins S8 and S17. May interact with IF1 in the 30S initiation complex.

Functionally, with S4 and S5 plays an important role in translational accuracy. Interacts with and stabilizes bases of the 16S rRNA that are involved in tRNA selection in the A site and with the mRNA backbone. Located at the interface of the 30S and 50S subunits, it traverses the body of the 30S subunit contacting proteins on the other side and probably holding the rRNA structure together. The combined cluster of proteins S8, S12 and S17 appears to hold together the shoulder and platform of the 30S subunit. The protein is Small ribosomal subunit protein uS12 of Serratia proteamaculans (strain 568).